The following is a 272-amino-acid chain: Phosphoglycolate phosphatase (272 aa).

Asp-19 acts as the Nucleophile in catalysis. Residues Asp-19, Asp-21, and Asp-182 each contribute to the Mg(2+) site.

The protein belongs to the HAD-like hydrolase superfamily. CbbY/CbbZ/Gph/YieH family. Mg(2+) serves as cofactor.

The enzyme catalyses 2-phosphoglycolate + H2O = glycolate + phosphate. The protein operates within organic acid metabolism; glycolate biosynthesis; glycolate from 2-phosphoglycolate: step 1/1. In terms of biological role, specifically catalyzes the dephosphorylation of 2-phosphoglycolate. Is involved in the dissimilation of the intracellular 2-phosphoglycolate formed during the DNA repair of 3'-phosphoglycolate ends, a major class of DNA lesions induced by oxidative stress. The chain is Phosphoglycolate phosphatase from Pseudomonas savastanoi pv. phaseolicola (strain 1448A / Race 6) (Pseudomonas syringae pv. phaseolicola (strain 1448A / Race 6)).